The following is a 698-amino-acid chain: MKSVKKSFQYGNHTVTLETGGVARQADGAVLVNMSDTVVLVTAVGRKEADPGKGFFPLTVNYQERTYAAGKIPGGFFKREGRPSEKETLTCRLIDRPIRPLFPEGFYNEVQVVATVLSMNPEVDADIPALIGASAALSISGIPFDGPIGAARVGYKDGEYLLNPTFEETAASDLDLVVAGTENAVLMVESEANQLPEEAMLGAVLYGHEQMQVAIQAINELTAEAGKPRWDWHPPQGDAALETAIKDLVGDDLAAAYQIPEKQERQNRIGELRQRAVEALGENREEEGGWPEKDVGDAFKGLEKDIVRGRILAGERRIDGRDTRTVRPIDIEVGSLPRTHGSAIFTRGETQAVVVTTLGTGRDAQIIDAIEGERKEQFMLHYNFPPYCVGETGFMGTPKRREIGHGKLAKRGIEAVMPAADDCPYVIRVVSEITESNGSSSMATVCGTSLSLMDAGVPVKAPVAGIAMGLIKEDEQFAVLSDILGDEDHLGDMDFKVAGTESGVTALQMDIKIQGITREIMEQALEQAREGRLHILGEMNNAISGPRSEMSEYAPRLLTIRIDPDKIRDVIGKGGATIRALTEETGTTIDISDDGKVTIASADKAAADEARRRIELLTADVEVGTVYEGKVSKLMDFGAFVNILPGRDGLVHISQISNERVERVGDYLKEGDTVRVKVLEVDRQGRIRLSMKAVQDGE.

Mg(2+) is bound by residues Asp488 and Asp494. The KH domain occupies 555–614; that stretch reads PRLLTIRIDPDKIRDVIGKGGATIRALTEETGTTIDISDDGKVTIASADKAAADEARRRI. An S1 motif domain is found at 624 to 692; it reads GTVYEGKVSK…RQGRIRLSMK (69 aa).

This sequence belongs to the polyribonucleotide nucleotidyltransferase family. Component of the RNA degradosome, which is a multiprotein complex involved in RNA processing and mRNA degradation. The cofactor is Mg(2+).

The protein resides in the cytoplasm. It carries out the reaction RNA(n+1) + phosphate = RNA(n) + a ribonucleoside 5'-diphosphate. Its function is as follows. Involved in mRNA degradation. Catalyzes the phosphorolysis of single-stranded polyribonucleotides processively in the 3'- to 5'-direction. The chain is Polyribonucleotide nucleotidyltransferase from Alkalilimnicola ehrlichii (strain ATCC BAA-1101 / DSM 17681 / MLHE-1).